Reading from the N-terminus, the 42-residue chain is MQDIKTYLSTAPVLAALSLGFLAGLLIEINRFFPDALIFPFF.

The chain crosses the membrane as a helical span at residues 7–27 (YLSTAPVLAALSLGFLAGLLI).

The protein belongs to the PsaJ family.

It localises to the plastid. It is found in the chloroplast thylakoid membrane. Its function is as follows. May help in the organization of the PsaE and PsaF subunits. In Cryptomeria japonica (Japanese cedar), this protein is Photosystem I reaction center subunit IX.